The primary structure comprises 328 residues: MIEKIWSGESPLWRLLLPLSWLYGLVSGAIRLCYKLKLKRAWRAPVPVVVVGNLTAGGNGKTPVVVWLVEQLQQRGIRVGVVSRGYGGKAESYPLLLSADTTTAQAGDEPVLIYQRTGAPVAVSPVRSDAVKAILAQHPDVQIIVTDDGLQHYRLARDVEIVVIDGVRRFGNGWWLPAGPMRERAGRLKSVDAVIVNGGVPRSGEIPMHLLPGQAVNLRTGTRCDVAQLEHVVAIAGIGHPPRFFATLKMCGVQPEKCVPLADHQSLNHADVSALVSAGQTLVMTEKDAVKCRAFAEENWWYLPVDAQLSGDEPAKLLAQLTSLASGH.

55–62 (TAGGNGKT) is an ATP binding site.

The protein belongs to the LpxK family.

It carries out the reaction a lipid A disaccharide + ATP = a lipid IVA + ADP + H(+). It functions in the pathway glycolipid biosynthesis; lipid IV(A) biosynthesis; lipid IV(A) from (3R)-3-hydroxytetradecanoyl-[acyl-carrier-protein] and UDP-N-acetyl-alpha-D-glucosamine: step 6/6. Transfers the gamma-phosphate of ATP to the 4'-position of a tetraacyldisaccharide 1-phosphate intermediate (termed DS-1-P) to form tetraacyldisaccharide 1,4'-bis-phosphate (lipid IVA). The polypeptide is Tetraacyldisaccharide 4'-kinase (Escherichia coli O45:K1 (strain S88 / ExPEC)).